The following is a 130-amino-acid chain: HTH-type transcriptional regulator KmtR (130 aa).

The HTH arsR-type domain occupies 10–104; it reads LPDDQVCLVV…DAVFNAEHAG (95 aa). The H-T-H motif DNA-binding region spans 44–67; the sequence is VNELAEQVGKPAPSVSQHLAKLRM. The interval 110–130 is disordered; sequence HHRAAGGLQSVAKASATKDVG.

Its activity is regulated as follows. Binding to DNA is inhibited by nickel and cobalt ions. In terms of biological role, represses expression of Rv2025c and its own expression. Acts by binding to the promoter regions. This Mycobacterium tuberculosis (strain ATCC 25618 / H37Rv) protein is HTH-type transcriptional regulator KmtR (kmtR).